The following is a 380-amino-acid chain: Cytochrome b (380 aa).

Transmembrane regions (helical) follow at residues phenylalanine 34–alanine 54, tryptophan 78–isoleucine 99, tryptophan 114–leucine 134, and phenylalanine 179–threonine 199. Positions 84 and 98 each coordinate heme b. Heme b contacts are provided by histidine 183 and histidine 197. Histidine 202 is a binding site for a ubiquinone. 4 helical membrane-spanning segments follow: residues leucine 227–serine 247, leucine 289–histidine 309, phenylalanine 321–serine 341, and phenylalanine 348–proline 368.

It belongs to the cytochrome b family. As to quaternary structure, the cytochrome bc1 complex contains 11 subunits: 3 respiratory subunits (MT-CYB, CYC1 and UQCRFS1), 2 core proteins (UQCRC1 and UQCRC2) and 6 low-molecular weight proteins (UQCRH/QCR6, UQCRB/QCR7, UQCRQ/QCR8, UQCR10/QCR9, UQCR11/QCR10 and a cleavage product of UQCRFS1). This cytochrome bc1 complex then forms a dimer. Heme b serves as cofactor.

It localises to the mitochondrion inner membrane. Functionally, component of the ubiquinol-cytochrome c reductase complex (complex III or cytochrome b-c1 complex) that is part of the mitochondrial respiratory chain. The b-c1 complex mediates electron transfer from ubiquinol to cytochrome c. Contributes to the generation of a proton gradient across the mitochondrial membrane that is then used for ATP synthesis. The polypeptide is Cytochrome b (MT-CYB) (Antigone antigone (Sarus crane)).